Consider the following 176-residue polypeptide: Large ribosomal subunit protein bL17 (176 aa).

The interval 124-176 (AAPKAARQDRSKRVKGSRKTEASAAKAAPAAQAAPELPAESDAPAAEAAPTEE) is disordered. Residues 145 to 176 (ASAAKAAPAAQAAPELPAESDAPAAEAAPTEE) show a composition bias toward low complexity.

This sequence belongs to the bacterial ribosomal protein bL17 family. As to quaternary structure, part of the 50S ribosomal subunit. Contacts protein L32.

The chain is Large ribosomal subunit protein bL17 from Chlorobium phaeovibrioides (strain DSM 265 / 1930) (Prosthecochloris vibrioformis (strain DSM 265)).